Reading from the N-terminus, the 273-residue chain is Ribosomal RNA small subunit methyltransferase A (273 aa).

Residues Asn18, Leu20, Gly45, Glu66, Asp91, and Asn113 each contribute to the S-adenosyl-L-methionine site.

The protein belongs to the class I-like SAM-binding methyltransferase superfamily. rRNA adenine N(6)-methyltransferase family. RsmA subfamily.

It is found in the cytoplasm. The catalysed reaction is adenosine(1518)/adenosine(1519) in 16S rRNA + 4 S-adenosyl-L-methionine = N(6)-dimethyladenosine(1518)/N(6)-dimethyladenosine(1519) in 16S rRNA + 4 S-adenosyl-L-homocysteine + 4 H(+). In terms of biological role, specifically dimethylates two adjacent adenosines (A1518 and A1519) in the loop of a conserved hairpin near the 3'-end of 16S rRNA in the 30S particle. May play a critical role in biogenesis of 30S subunits. The chain is Ribosomal RNA small subunit methyltransferase A from Citrobacter koseri (strain ATCC BAA-895 / CDC 4225-83 / SGSC4696).